The sequence spans 124 residues: Glycine cleavage system H protein (124 aa).

The 83-residue stretch at 19 to 101 (TGTVGITDYA…AGKGWFLQIK (83 aa)) folds into the Lipoyl-binding domain. Lysine 60 carries the post-translational modification N6-lipoyllysine.

It belongs to the GcvH family. The glycine cleavage system is composed of four proteins: P, T, L and H. It depends on (R)-lipoate as a cofactor.

Its function is as follows. The glycine cleavage system catalyzes the degradation of glycine. The H protein shuttles the methylamine group of glycine from the P protein to the T protein. This Beijerinckia indica subsp. indica (strain ATCC 9039 / DSM 1715 / NCIMB 8712) protein is Glycine cleavage system H protein.